A 464-amino-acid chain; its full sequence is Phospho-cellobiase (464 aa).

Residue Glu172 is the Proton donor of the active site. Glu361 functions as the Nucleophile in the catalytic mechanism.

This sequence belongs to the glycosyl hydrolase 1 family.

The chain is Phospho-cellobiase (casB) from Klebsiella oxytoca.